The following is a 1023-amino-acid chain: Vacuolar membrane protease (1023 aa).

Topologically, residues 1–80 (MRAAGCGGTG…FFRSVFGYRK (80 aa)) are cytoplasmic. Residues 17–48 (KLSRSISQHQPKSMPQASVNSEQNPSVPNSPS) show a composition bias toward polar residues. The disordered stretch occupies residues 17–59 (KLSRSISQHQPKSMPQASVNSEQNPSVPNSPSAHKPARSQSAQ). A helical transmembrane segment spans residues 81-101 (TSLTFLVALVFAATLLLSWAD). Over 102 to 425 (SSLDFSVDMP…VVFSVSQVVS (324 aa)) the chain is Vacuolar. 2 N-linked (GlcNAc...) asparagine glycosylation sites follow: Asn170 and Asn200. Positions 214 and 226 each coordinate Zn(2+). Glu259 acts as the Proton acceptor in catalysis. 3 residues coordinate Zn(2+): Glu260, Glu285, and His357. Residues 426–446 (ANIALLVVVPVASLLLLFIIF) traverse the membrane as a helical segment. Residues 447–461 (RCNKGWGFNFVNAIK) are Cytoplasmic-facing. The helical transmembrane segment at 462–482 (YPLSLVASVLVLTFVSQVIIV) threads the bilayer. The Vacuolar portion of the chain corresponds to 483-491 (PSNPFLVNS). Asn490 carries N-linked (GlcNAc...) asparagine glycosylation. Residues 492 to 512 (SIGLLVATLFSLFLLLNYIVL) traverse the membrane as a helical segment. Over 513 to 529 (NGLNLVFKSFKGHQHDE) the chain is Cytoplasmic. A helical membrane pass occupies residues 530–550 (KLIVMCESSFLTWILLLWSTV). The Vacuolar segment spans residues 551 to 564 (KLSHNKFGDDHTGE). Residues 565–585 (LFIPILFSLQAVACFLGFLGW) traverse the membrane as a helical segment. Residues 586-643 (CFKPSKKVKVSREEHQPLLSSNGSNYGTQDDDDSLAPSSSLSLQSGFSENCEVHETKS) lie on the Cytoplasmic side of the membrane. A compositionally biased stretch (polar residues) spans 604 to 613 (LSSNGSNYGT). A disordered region spans residues 604 to 626 (LSSNGSNYGTQDDDDSLAPSSSL). A helical membrane pass occupies residues 644–664 (FSYDWLVQFLVIVPISSLIIF). Topologically, residues 665 to 687 (NSGSLILNGLNKSIQESLSAQNL) are vacuolar. A glycan (N-linked (GlcNAc...) asparagine) is linked at Asn675. Residues 688–708 (IYKFIQIFVIVWSIPFLPFIF) form a helical membrane-spanning segment. The Cytoplasmic portion of the chain corresponds to 709 to 712 (KLNR). The helical transmembrane segment at 713 to 733 (IIVLALSLVLLYGFFAVNITD) threads the bilayer. Residues 734–1023 (AFNDANPLKL…MVSVTKYIEV (290 aa)) lie on the Vacuolar side of the membrane. Residues Asn815, Asn858, and Asn892 are each glycosylated (N-linked (GlcNAc...) asparagine).

Belongs to the peptidase M28 family. Zn(2+) is required as a cofactor.

The protein localises to the vacuole membrane. Functionally, may be involved in vacuolar sorting and osmoregulation. This is Vacuolar membrane protease from Clavispora lusitaniae (strain ATCC 42720) (Yeast).